The sequence spans 79 residues: Small ribosomal subunit protein bS18 (79 aa).

Belongs to the bacterial ribosomal protein bS18 family. As to quaternary structure, part of the 30S ribosomal subunit. Forms a tight heterodimer with protein bS6.

Its function is as follows. Binds as a heterodimer with protein bS6 to the central domain of the 16S rRNA, where it helps stabilize the platform of the 30S subunit. This chain is Small ribosomal subunit protein bS18, found in Bacillus licheniformis (strain ATCC 14580 / DSM 13 / JCM 2505 / CCUG 7422 / NBRC 12200 / NCIMB 9375 / NCTC 10341 / NRRL NRS-1264 / Gibson 46).